Here is a 293-residue protein sequence, read N- to C-terminus: Phosphatidylserine decarboxylase proenzyme (293 aa).

Residues aspartate 90, histidine 147, and serine 254 each act as charge relay system; for autoendoproteolytic cleavage activity in the active site. Serine 254 serves as the catalytic Schiff-base intermediate with substrate; via pyruvic acid; for decarboxylase activity. Serine 254 bears the Pyruvic acid (Ser); by autocatalysis mark.

This sequence belongs to the phosphatidylserine decarboxylase family. PSD-B subfamily. Prokaryotic type I sub-subfamily. In terms of assembly, heterodimer of a large membrane-associated beta subunit and a small pyruvoyl-containing alpha subunit. It depends on pyruvate as a cofactor. In terms of processing, is synthesized initially as an inactive proenzyme. Formation of the active enzyme involves a self-maturation process in which the active site pyruvoyl group is generated from an internal serine residue via an autocatalytic post-translational modification. Two non-identical subunits are generated from the proenzyme in this reaction, and the pyruvate is formed at the N-terminus of the alpha chain, which is derived from the carboxyl end of the proenzyme. The autoendoproteolytic cleavage occurs by a canonical serine protease mechanism, in which the side chain hydroxyl group of the serine supplies its oxygen atom to form the C-terminus of the beta chain, while the remainder of the serine residue undergoes an oxidative deamination to produce ammonia and the pyruvoyl prosthetic group on the alpha chain. During this reaction, the Ser that is part of the protease active site of the proenzyme becomes the pyruvoyl prosthetic group, which constitutes an essential element of the active site of the mature decarboxylase.

The protein localises to the cell membrane. It carries out the reaction a 1,2-diacyl-sn-glycero-3-phospho-L-serine + H(+) = a 1,2-diacyl-sn-glycero-3-phosphoethanolamine + CO2. It participates in phospholipid metabolism; phosphatidylethanolamine biosynthesis; phosphatidylethanolamine from CDP-diacylglycerol: step 2/2. Functionally, catalyzes the formation of phosphatidylethanolamine (PtdEtn) from phosphatidylserine (PtdSer). This chain is Phosphatidylserine decarboxylase proenzyme, found in Yersinia pseudotuberculosis serotype O:1b (strain IP 31758).